Here is a 422-residue protein sequence, read N- to C-terminus: UDP-N-acetylglucosamine 1-carboxyvinyltransferase 2 (422 aa).

22 to 23 serves as a coordination point for phosphoenolpyruvate; that stretch reads KN. A UDP-N-acetyl-alpha-D-glucosamine-binding site is contributed by Arg93. Catalysis depends on Cys117, which acts as the Proton donor. Cys117 carries the 2-(S-cysteinyl)pyruvic acid O-phosphothioketal modification. UDP-N-acetyl-alpha-D-glucosamine-binding positions include 122–126, Asp308, and Ile330; that span reads RPVDL.

This sequence belongs to the EPSP synthase family. MurA subfamily.

It is found in the cytoplasm. It carries out the reaction phosphoenolpyruvate + UDP-N-acetyl-alpha-D-glucosamine = UDP-N-acetyl-3-O-(1-carboxyvinyl)-alpha-D-glucosamine + phosphate. It functions in the pathway cell wall biogenesis; peptidoglycan biosynthesis. Cell wall formation. Adds enolpyruvyl to UDP-N-acetylglucosamine. This Legionella pneumophila (strain Lens) protein is UDP-N-acetylglucosamine 1-carboxyvinyltransferase 2.